The primary structure comprises 239 residues: Large ribosomal subunit protein uL1 (239 aa).

Belongs to the universal ribosomal protein uL1 family. In terms of assembly, part of the 50S ribosomal subunit.

Functionally, binds directly to 23S rRNA. The L1 stalk is quite mobile in the ribosome, and is involved in E site tRNA release. Protein L1 is also a translational repressor protein, it controls the translation of the L11 operon by binding to its mRNA. The protein is Large ribosomal subunit protein uL1 of Rickettsia canadensis (strain McKiel).